The sequence spans 130 residues: Small ribosomal subunit protein uS9 (130 aa).

It belongs to the universal ribosomal protein uS9 family.

The protein is Small ribosomal subunit protein uS9 of Caldicellulosiruptor saccharolyticus (strain ATCC 43494 / DSM 8903 / Tp8T 6331).